The chain runs to 295 residues: Nitrogenase iron protein (295 aa).

Position 11–18 (11–18 (GKGGIGKS)) interacts with ATP. Position 99 (cysteine 99) interacts with [4Fe-4S] cluster. Position 102 is an ADP-ribosylarginine; by dinitrogenase reductase ADP-ribosyltransferase (arginine 102). Cysteine 133 contributes to the [4Fe-4S] cluster binding site.

The protein belongs to the NifH/BchL/ChlL family. As to quaternary structure, homodimer. Requires [4Fe-4S] cluster as cofactor. Post-translationally, the reversible ADP-ribosylation of Arg-102 inactivates the nitrogenase reductase and regulates nitrogenase activity.

It carries out the reaction N2 + 8 reduced [2Fe-2S]-[ferredoxin] + 16 ATP + 16 H2O = H2 + 8 oxidized [2Fe-2S]-[ferredoxin] + 2 NH4(+) + 16 ADP + 16 phosphate + 6 H(+). Functionally, the key enzymatic reactions in nitrogen fixation are catalyzed by the nitrogenase complex, which has 2 components: the iron protein and the molybdenum-iron protein. This Zymomonas mobilis subsp. mobilis (strain ATCC 31821 / ZM4 / CP4) protein is Nitrogenase iron protein.